The primary structure comprises 24 residues: Humanin-like 9 (24 aa).

The protein belongs to the humanin family. In terms of tissue distribution, highly expressed in the kidney, heart muscle and testis.

The protein localises to the secreted. It localises to the cytoplasm. Functionally, plays a role as a neuroprotective and antiapoptotic factor. The protein is Humanin-like 9 of Homo sapiens (Human).